Consider the following 426-residue polypeptide: MSSSILNELGWRGLVAQSTDLDALADELRRGPMTVYAGFDPTAPSLHVGHLVPLLVLRRFQRAGHRPIVLAGGATGMIGDPRDIGERTLNEAYTVAEWAERIRGQLERFVEFDDVAKSRNGAIVVNNLEWTSPMSAIEFLRDVGKHFSINLMLDRDTIRRRLNGQGISYTEFSYMLLQANDYAELHQRHGCALQIGGSDQWGNIIAGVRLVRQKLGATVHALTVPLVTAADGAKLGKSTGGGSLWLDPEMTSPYAWYQYFINTSDADVIRYLRWFTFLLPEELVELEQTTVSRPQERAAQRRLATELTVLVHGAAATQAVEHASRALFGQGELARLDEATLATALRETVVAELKPGNPDGIVDLLVASGLSPSRGAARRTIDEGGVLVNNIRIQSEEWTPRTSDFLHGRWLVLRRGKRNIAGIERV.

An L-tyrosine-binding site is contributed by Tyr-36. The short motif at 41 to 50 (PTAPSLHVGH) is the 'HIGH' region element. L-tyrosine contacts are provided by Tyr-174 and Gln-178. Residues 234 to 238 (KLGKS) carry the 'KMSKS' region motif. Lys-237 is an ATP binding site. The S4 RNA-binding domain occupies 359-416 (DGIVDLLVASGLSPSRGAARRTIDEGGVLVNNIRIQSEEWTPRTSDFLHGRWLVLRRG).

The protein belongs to the class-I aminoacyl-tRNA synthetase family. TyrS type 1 subfamily. As to quaternary structure, homodimer.

The protein resides in the cytoplasm. The catalysed reaction is tRNA(Tyr) + L-tyrosine + ATP = L-tyrosyl-tRNA(Tyr) + AMP + diphosphate + H(+). Its function is as follows. Catalyzes the attachment of tyrosine to tRNA(Tyr) in a two-step reaction: tyrosine is first activated by ATP to form Tyr-AMP and then transferred to the acceptor end of tRNA(Tyr). The protein is Tyrosine--tRNA ligase of Mycobacterium leprae (strain TN).